We begin with the raw amino-acid sequence, 109 residues long: Tyrosine-protein phosphatase 16 (109 aa).

Positions 1-109 constitute a Tyrosine-protein phosphatase domain; it reads WRMVTEHTST…RIKTQKPIVV (109 aa). D81 is a binding site for substrate.

The protein belongs to the protein-tyrosine phosphatase family.

The enzyme catalyses O-phospho-L-tyrosyl-[protein] + H2O = L-tyrosyl-[protein] + phosphate. This chain is Tyrosine-protein phosphatase 16 (STY-16), found in Styela plicata (Wrinkled sea squirt).